Here is a 559-residue protein sequence, read N- to C-terminus: Alkaline phosphatase PhoK (559 aa).

The first 19 residues, 1 to 19, serve as a signal peptide directing secretion; the sequence is MLKHVAAALLLATAMPVVA. Zn(2+) contacts are provided by D49 and T89. T89 serves as the catalytic Phosphothreonine intermediate. C90 and C126 are joined by a disulfide. Substrate contacts are provided by residues N110 and 171–173; that span reads KDR. C231 and C314 are disulfide-bonded. D300, H304, D345, H346, and H491 together coordinate Zn(2+). C545 and C556 form a disulfide bridge.

Monomer. The cofactor is Zn(2+).

It is found in the secreted. It catalyses the reaction a phosphate monoester + H2O = an alcohol + phosphate. Alkaline phosphatase with broad substrate specificity. Precipitates uranium from alkaline solutions. In Sphingomonas sp, this protein is Alkaline phosphatase PhoK.